A 98-amino-acid polypeptide reads, in one-letter code: MSMVYFNIFMAFTVSFVGLLMYRSHLMSSLLCLEGMMLSLFVMMSMTILNNHFTLANMAPIILLVFAACEAALGLSLLVMVSNTYGTDYVQNLNLLQC.

Transmembrane regions (helical) follow at residues 1-21, 29-49, and 61-81; these read MSMV…GLLM, SLLC…MTIL, and IILL…LVMV.

Belongs to the complex I subunit 4L family. In terms of assembly, core subunit of respiratory chain NADH dehydrogenase (Complex I) which is composed of 45 different subunits.

Its subcellular location is the mitochondrion inner membrane. It catalyses the reaction a ubiquinone + NADH + 5 H(+)(in) = a ubiquinol + NAD(+) + 4 H(+)(out). In terms of biological role, core subunit of the mitochondrial membrane respiratory chain NADH dehydrogenase (Complex I) which catalyzes electron transfer from NADH through the respiratory chain, using ubiquinone as an electron acceptor. Part of the enzyme membrane arm which is embedded in the lipid bilayer and involved in proton translocation. The chain is NADH-ubiquinone oxidoreductase chain 4L (MT-ND4L) from Phocarctos hookeri (Hooker's sea lion).